Here is a 348-residue protein sequence, read N- to C-terminus: tRNA N6-adenosine threonylcarbamoyltransferase (348 aa).

2 residues coordinate Fe cation: histidine 115 and histidine 119. Substrate is bound by residues 137 to 141, aspartate 170, glycine 183, and asparagine 281; that span reads LASGG. Residue aspartate 309 participates in Fe cation binding.

This sequence belongs to the KAE1 / TsaD family. The cofactor is Fe(2+).

The protein localises to the cytoplasm. It carries out the reaction L-threonylcarbamoyladenylate + adenosine(37) in tRNA = N(6)-L-threonylcarbamoyladenosine(37) in tRNA + AMP + H(+). Required for the formation of a threonylcarbamoyl group on adenosine at position 37 (t(6)A37) in tRNAs that read codons beginning with adenine. Is involved in the transfer of the threonylcarbamoyl moiety of threonylcarbamoyl-AMP (TC-AMP) to the N6 group of A37, together with TsaE and TsaB. TsaD likely plays a direct catalytic role in this reaction. This Methylobacterium sp. (strain 4-46) protein is tRNA N6-adenosine threonylcarbamoyltransferase.